Here is a 284-residue protein sequence, read N- to C-terminus: Signal peptidase I (284 aa).

The chain crosses the membrane as a helical span at residues 4 to 22 (NFPLLLVIAVAVCGLLALL). At 23–58 (DLVFFAPRRRSAIASYQGSVSQPDAVVIEKLNKEPL) the chain is on the cytoplasmic side. The helical transmembrane segment at 59-77 (LVEYGKSFFPVLFIVLVLR) threads the bilayer. At 78-284 (SFLVEPFQIP…PNFSRVGLIK (207 aa)) the chain is on the periplasmic side. Active-site residues include S90 and K145.

Belongs to the peptidase S26 family.

The protein localises to the cell inner membrane. It carries out the reaction Cleavage of hydrophobic, N-terminal signal or leader sequences from secreted and periplasmic proteins.. This chain is Signal peptidase I (lepB), found in Pseudomonas fluorescens.